The sequence spans 195 residues: Probable GTP-binding protein EngB (195 aa).

The EngB-type G domain maps to 22 to 194; that stretch reads LKGEVAFVGR…LDLISTLLKE (173 aa). Residues 30–37, 56–60, 74–77, 141–144, and 173–175 each bind GTP; these read GRSNVGKS, GKTRS, DLPG, TKMD, and TSS. Residues serine 37 and threonine 58 each contribute to the Mg(2+) site.

The protein belongs to the TRAFAC class TrmE-Era-EngA-EngB-Septin-like GTPase superfamily. EngB GTPase family. Mg(2+) serves as cofactor.

In terms of biological role, necessary for normal cell division and for the maintenance of normal septation. The polypeptide is Probable GTP-binding protein EngB (Thermotoga petrophila (strain ATCC BAA-488 / DSM 13995 / JCM 10881 / RKU-1)).